Consider the following 23-residue polypeptide: Basic phospholipase A2 CB2 (23 aa).

It depends on Ca(2+) as a cofactor. Contains 7 disulfide bonds. As to expression, expressed by the venom gland.

It localises to the secreted. The catalysed reaction is a 1,2-diacyl-sn-glycero-3-phosphocholine + H2O = a 1-acyl-sn-glycero-3-phosphocholine + a fatty acid + H(+). Snake venom phospholipase A2 (PLA2) that shows presynaptic neurotoxicity. PLA2 catalyzes the calcium-dependent hydrolysis of the 2-acyl groups in 3-sn-phosphoglycerides. The chain is Basic phospholipase A2 CB2 from Crotalus durissus cumanensis (South American rattlesnake).